A 266-amino-acid chain; its full sequence is MAVGKNKRLTKGGKKGAKKKIVDPFSKKDWYDVKAPAMFNIRNLGKTLVTRTQGTRIASDGLKGRVFEVSLADLQNDEVAFRKFKLITEDVQGKNCLTNFHGMDLTRDKMCSMVKKWQTMIEAHVDVKTTDGYLLRLFCVGFTKKRTNQIRKTSYAQHQQVRQIRKKMMEIMTREVQTNDLKEVVNKLIPDSVGKDIEKACQSIYPLHDVYVRKVKMLKKPKFELGKLMELHGEGGTGTATKATGDDTGAKVERADGYEPPIQETV.

Positions 234 to 266 (EGGTGTATKATGDDTGAKVERADGYEPPIQETV) are disordered. The span at 244-257 (TGDDTGAKVERADG) shows a compositional bias: basic and acidic residues.

It belongs to the eukaryotic ribosomal protein eS1 family. Component of the small ribosomal subunit. Mature ribosomes consist of a small (40S) and a large (60S) subunit. The 40S subunit contains about 33 different proteins and 1 molecule of RNA (18S). The 60S subunit contains about 49 different proteins and 3 molecules of RNA (28S, 5.8S and 5S). Part of the small subunit (SSU) processome, composed of more than 70 proteins and the RNA chaperone small nucleolar RNA (snoRNA) U3.

It localises to the cytoplasm. The protein localises to the nucleus. The protein resides in the nucleolus. Functionally, component of the small ribosomal subunit. The ribosome is a large ribonucleoprotein complex responsible for the synthesis of proteins in the cell. Part of the small subunit (SSU) processome, first precursor of the small eukaryotic ribosomal subunit. During the assembly of the SSU processome in the nucleolus, many ribosome biogenesis factors, an RNA chaperone and ribosomal proteins associate with the nascent pre-rRNA and work in concert to generate RNA folding, modifications, rearrangements and cleavage as well as targeted degradation of pre-ribosomal RNA by the RNA exosome. May play a role during erythropoiesis. This chain is Small ribosomal subunit protein eS1 (rps3a), found in Solea senegalensis (Senegalese sole).